A 2156-amino-acid chain; its full sequence is Probable capsid protein 3 (2156 aa).

A disordered region spans residues 1319–1345; sequence NKSNKSNKSNESDKSSESDKSSESSNH. Residues 1326–1345 are compositionally biased toward basic and acidic residues; sequence KSNESDKSSESDKSSESSNH.

It belongs to the NCLDV major capsid protein family.

Its subcellular location is the virion. The polypeptide is Probable capsid protein 3 (Acanthamoeba polyphaga mimivirus (APMV)).